The chain runs to 271 residues: Tryptophan synthase alpha chain (271 aa).

Active-site proton acceptor residues include glutamate 49 and aspartate 60.

Belongs to the TrpA family. Tetramer of two alpha and two beta chains.

It carries out the reaction (1S,2R)-1-C-(indol-3-yl)glycerol 3-phosphate + L-serine = D-glyceraldehyde 3-phosphate + L-tryptophan + H2O. The protein operates within amino-acid biosynthesis; L-tryptophan biosynthesis; L-tryptophan from chorismate: step 5/5. Functionally, the alpha subunit is responsible for the aldol cleavage of indoleglycerol phosphate to indole and glyceraldehyde 3-phosphate. The polypeptide is Tryptophan synthase alpha chain (Burkholderia mallei (strain NCTC 10247)).